We begin with the raw amino-acid sequence, 736 residues long: Microtubule-associated protein mu-2 (736 aa).

The protein belongs to the orthoreovirus mu-2 protein family. In terms of assembly, interacts with protein mu-NS; in viral inclusions. Interacts with polymerase lambda-3; this interaction stimulates the ATPase activity of mu-2. The cofactor is a divalent metal cation.

The protein resides in the virion. It localises to the host cytoplasm. Its subcellular location is the host cytoskeleton. Minor inner capsid (core) component. Displays NTPase and RNA 5'-triphosphatase (RTPase) activities. ATP is the preferred substrate for hydrolysis. May function as a cofactor of polymerase lambda-3. Associates with microtubules and plays a role in the formation, structural organization and morphology of viral inclusions, where the assembly of cores and the replication of viral RNA occur. Together with mu-NS, recruits the other core proteins to these inclusions. This is Microtubule-associated protein mu-2 (M1) from Mammalia (T1L).